Here is a 177-residue protein sequence, read N- to C-terminus: Large ribosomal subunit protein uL6 (177 aa).

The protein belongs to the universal ribosomal protein uL6 family. In terms of assembly, part of the 50S ribosomal subunit.

This protein binds to the 23S rRNA, and is important in its secondary structure. It is located near the subunit interface in the base of the L7/L12 stalk, and near the tRNA binding site of the peptidyltransferase center. This chain is Large ribosomal subunit protein uL6, found in Erwinia tasmaniensis (strain DSM 17950 / CFBP 7177 / CIP 109463 / NCPPB 4357 / Et1/99).